The chain runs to 215 residues: Tail hub protein A (215 aa).

As to quaternary structure, heterotrimer with THB. The heterotrimers further assemble as 12 docking hubs that anchor the trimeric tail fibers.

The protein resides in the virion. In terms of biological role, forms the tail hub together with tail hub protein B (THB). The polypeptide is Tail hub protein A (Bacteroides phage crAss001 (Bacteroides phage PhiCrAss001)).